The primary structure comprises 201 residues: Adenylyl-sulfate kinase (201 aa).

Gly-35–Ser-42 lines the ATP pocket. Catalysis depends on Ser-109, which acts as the Phosphoserine intermediate.

It belongs to the APS kinase family.

The catalysed reaction is adenosine 5'-phosphosulfate + ATP = 3'-phosphoadenylyl sulfate + ADP + H(+). The protein operates within sulfur metabolism; hydrogen sulfide biosynthesis; sulfite from sulfate: step 2/3. Its function is as follows. Catalyzes the synthesis of activated sulfate. This Escherichia coli (strain ATCC 8739 / DSM 1576 / NBRC 3972 / NCIMB 8545 / WDCM 00012 / Crooks) protein is Adenylyl-sulfate kinase.